The chain runs to 690 residues: UvrABC system protein B (690 aa).

One can recognise a Helicase ATP-binding domain in the interval 39-422 (EGLDDGLSFQ…EQQHAGQVVE (384 aa)). 52-59 (GVTGSGKT) serves as a coordination point for ATP. The short motif at 105–128 (YYDYYQPEAYVPSRDLFIEKDSSI) is the Beta-hairpin element. Residues 443 to 596 (QVDDLLAEIG…QIAFNLEHGI (154 aa)) enclose the Helicase C-terminal domain. The UVR domain occupies 640–675 (AREIKRLEKSMMECAKNLEFEKAAAARDDLFRLRER).

The protein belongs to the UvrB family. In terms of assembly, forms a heterotetramer with UvrA during the search for lesions. Interacts with UvrC in an incision complex.

Its subcellular location is the cytoplasm. The UvrABC repair system catalyzes the recognition and processing of DNA lesions. A damage recognition complex composed of 2 UvrA and 2 UvrB subunits scans DNA for abnormalities. Upon binding of the UvrA(2)B(2) complex to a putative damaged site, the DNA wraps around one UvrB monomer. DNA wrap is dependent on ATP binding by UvrB and probably causes local melting of the DNA helix, facilitating insertion of UvrB beta-hairpin between the DNA strands. Then UvrB probes one DNA strand for the presence of a lesion. If a lesion is found the UvrA subunits dissociate and the UvrB-DNA preincision complex is formed. This complex is subsequently bound by UvrC and the second UvrB is released. If no lesion is found, the DNA wraps around the other UvrB subunit that will check the other stand for damage. This is UvrABC system protein B from Dechloromonas aromatica (strain RCB).